A 756-amino-acid chain; its full sequence is Serine/threonine-protein kinase CBK1 (756 aa).

Disordered stretches follow at residues 1 to 180 and 242 to 261; these read MYNS…SYSS and QQQQQQQSQSPVQSGFNNGT. The span at 23 to 34 shows a compositional bias: low complexity; that stretch reads QQQDQQHQQQQQ. Residues 53–77 show a composition bias toward polar residues; that stretch reads FSSNYMKEQGSHQSLQEHLQRETGN. Threonine 109 bears the Phosphothreonine mark. Residues 120–180 are compositionally biased toward polar residues; that stretch reads HNNNSQSMVQ…TLRSNGSYSS (61 aa). Residues 242-255 are compositionally biased toward low complexity; sequence QQQQQQQSQSPVQS. Positions 352 to 672 constitute a Protein kinase domain; the sequence is FHTVKVIGKG…ADEIKSHPFF (321 aa). ATP contacts are provided by residues 358–366 and lysine 381; that span reads IGKGAFGEV. The active-site Proton acceptor is aspartate 475. The AGC-kinase C-terminal domain occupies 673 to 754; sequence RGVDWNTIRQ…SRFDYLTRKN (82 aa). Positions 707–732 are disordered; sequence NVPDSPAMAQAAKQREQMTKQGGSAP.

Belongs to the protein kinase superfamily. STE Ser/Thr protein kinase family. COT1 subfamily. Associates with PAG1/TAO3 and interacts with MOB2.

It catalyses the reaction L-seryl-[protein] + ATP = O-phospho-L-seryl-[protein] + ADP + H(+). The catalysed reaction is L-threonyl-[protein] + ATP = O-phospho-L-threonyl-[protein] + ADP + H(+). Its function is as follows. Protein kinase that seems to play a role in the regulation of cell morphogenesis and proliferation. This chain is Serine/threonine-protein kinase CBK1 (CBK1), found in Saccharomyces cerevisiae (strain ATCC 204508 / S288c) (Baker's yeast).